Reading from the N-terminus, the 298-residue chain is GTPase Era (298 aa).

Residues 4 to 171 enclose the Era-type G domain; it reads KSGFVSVIGR…LKEALDYIPE (168 aa). Residues 12–19 form a G1 region; sequence GRPNVGKS. 12–19 serves as a coordination point for GTP; sequence GRPNVGKS. The interval 38–42 is G2; that stretch reads QTTRN. The segment at 59–62 is G3; that stretch reads DTPG. GTP is bound by residues 59-63 and 121-124; these read DTPGI and NKVD. The interval 121–124 is G4; that stretch reads NKVD. The interval 150 to 152 is G5; sequence ISA. The KH type-2 domain occupies 202–279; the sequence is LDDEVPHGVG…FLELWVKVKP (78 aa).

The protein belongs to the TRAFAC class TrmE-Era-EngA-EngB-Septin-like GTPase superfamily. Era GTPase family. In terms of assembly, monomer.

The protein resides in the cytoplasm. Its subcellular location is the cell membrane. In terms of biological role, an essential GTPase that binds both GDP and GTP, with rapid nucleotide exchange. Plays a role in 16S rRNA processing and 30S ribosomal subunit biogenesis and possibly also in cell cycle regulation and energy metabolism. The chain is GTPase Era from Ruminiclostridium cellulolyticum (strain ATCC 35319 / DSM 5812 / JCM 6584 / H10) (Clostridium cellulolyticum).